Here is a 334-residue protein sequence, read N- to C-terminus: N-acetyl-S-alkylcysteine monooxygenase (334 aa).

To bacterial alkanal monooxygenase alpha and beta chains.

It catalyses the reaction N-acetyl-S-benzyl-L-cysteine + FMNH2 + O2 = (R)-N-acetyl-S-benzyl-L-cysteine sulfoxide + FMN + H2O + H(+). The catalysed reaction is N-acetyl-S-methyl-L-cysteine + FMNH2 + O2 = (R)-N-acetyl-S-methyl-L-cysteine sulfoxide + FMN + H2O + H(+). The protein operates within amino-acid metabolism. Involved in a cysteine salvage pathway from S-alkylcysteine. Catalyzes the oxidation of N-acetyl-S-benzyl-L-cysteine and N-acetyl-S-methyl-L-cysteine to (R)-N-acetyl-S-benzyl-L-cysteine sulfoxide and (R)-N-acetyl-S-methyl-L-cysteine sulfoxide, respectively. This pathway is likely important in the catabolism of alkylated cysteine generated by proteolysis of alkylated glutathione formed in the detoxification of a wide range of electrophiles. The chain is N-acetyl-S-alkylcysteine monooxygenase from Bacillus subtilis (strain 168).